The chain runs to 344 residues: Heat-inducible transcription repressor HrcA (344 aa).

It belongs to the HrcA family.

Its function is as follows. Negative regulator of class I heat shock genes (grpE-dnaK-dnaJ and groELS operons). Prevents heat-shock induction of these operons. The chain is Heat-inducible transcription repressor HrcA from Aster yellows witches'-broom phytoplasma (strain AYWB).